We begin with the raw amino-acid sequence, 101 residues long: Signal recognition particle 19 kDa protein (101 aa).

The protein belongs to the SRP19 family. As to quaternary structure, part of the signal recognition particle protein translocation system, which is composed of SRP and FtsY. Archaeal SRP consists of a 7S RNA molecule of 300 nucleotides and two protein subunits: SRP54 and SRP19.

Its subcellular location is the cytoplasm. Functionally, involved in targeting and insertion of nascent membrane proteins into the cytoplasmic membrane. Binds directly to 7S RNA and mediates binding of the 54 kDa subunit of the SRP. The sequence is that of Signal recognition particle 19 kDa protein from Methanosarcina barkeri (strain Fusaro / DSM 804).